The primary structure comprises 154 residues: Protein FAM162A (154 aa).

Residues R76–K102 form a required for proapoptotic activity region. A helical transmembrane segment spans residues I103–I120.

This sequence belongs to the UPF0389 family. Interacts with HSP90AB1; HSP90AB1 is essential for FAM162A mitochondrial localization and pro-apoptotic activity. Interacts with VDAC2; the interaction is probably involved in inducing mitochondrial permeability transition.

Its subcellular location is the mitochondrion membrane. Proposed to be involved in regulation of apoptosis; the exact mechanism may differ between cell types/tissues. May be involved in hypoxia-induced cell death of transformed cells implicating cytochrome C release and caspase activation (such as CASP9) and inducing mitochondrial permeability transition. May be involved in hypoxia-induced cell death of neuronal cells probably by promoting release of AIFM1 from mitochondria to cytoplasm and its translocation to the nucleus; however, the involvement of caspases has been reported conflictingly. The chain is Protein FAM162A (FAM162A) from Homo sapiens (Human).